We begin with the raw amino-acid sequence, 616 residues long: Matrix metalloproteinase-21 (616 aa).

The signal sequence occupies residues Met1 to Gln22. The propeptide occupies Glu23–Arg192. A Cysteine switch motif is present at residues Pro139 to Asn146. Cys141 contacts Zn(2+). The disordered stretch occupies residues Ser157 to Ser186. N-linked (GlcNAc...) asparagine glycans are attached at residues Asn161, Asn172, and Asn181. His329 provides a ligand contact to Zn(2+). Residue Glu330 is part of the active site. Zn(2+)-binding residues include His333 and His339. The cysteines at positions 375 and 606 are disulfide-linked. Hemopexin repeat units follow at residues Glu376 to Ile435, Ala437 to Ile493, Pro494 to Val542, and Phe549 to Ile605. N-linked (GlcNAc...) asparagine glycosylation is present at Asn418. The N-linked (GlcNAc...) asparagine glycan is linked to Asn597.

This sequence belongs to the peptidase M10A family. Zn(2+) serves as cofactor. Ca(2+) is required as a cofactor. In terms of processing, the precursor is cleaved by a furin endopeptidase.

It localises to the secreted. May play a role in gastrulation-related cell movement. Plays a specialized role in the generation of left-right asymmetry during embryogenesis. May act as a negative regulator of the NOTCH-signaling pathway. The chain is Matrix metalloproteinase-21 (MMP21) from Cynops pyrrhogaster (Japanese fire-bellied newt).